The chain runs to 447 residues: Na(+)-translocating NADH-quinone reductase subunit A (447 aa).

Belongs to the NqrA family. In terms of assembly, composed of six subunits; NqrA, NqrB, NqrC, NqrD, NqrE and NqrF.

It carries out the reaction a ubiquinone + n Na(+)(in) + NADH + H(+) = a ubiquinol + n Na(+)(out) + NAD(+). NQR complex catalyzes the reduction of ubiquinone-1 to ubiquinol by two successive reactions, coupled with the transport of Na(+) ions from the cytoplasm to the periplasm. NqrA to NqrE are probably involved in the second step, the conversion of ubisemiquinone to ubiquinol. This chain is Na(+)-translocating NADH-quinone reductase subunit A, found in Haemophilus influenzae (strain PittEE).